The sequence spans 219 residues: Salivary IL-4-inducing protein (219 aa).

Residues 1–19 form the signal peptide; sequence MKYLLTLLMALSLVNLMLT. The segment at 19–109 is disordered; sequence TRPTPEDDGG…KNDPRETYNK (91 aa). Over residues 30 to 43 the composition is skewed to low complexity; the sequence is SEEPQTQETTGETT. Positions 72-107 are enriched in basic and acidic residues; sequence DDTAKKEDDGESKDGEGSEKSDKEKGEPKNDPRETY.

Salivary gland (at protein level).

The protein resides in the secreted. In terms of biological role, induces expression of IL4 in host skin by diverting host CD4 cells away from Th1 and towards Th2 responsiveness. Induces expression of IL10 in host skin. Down-regulates expression of IL12B, IFN-gamma (IFNG) and TNF-alpha (TNF) in host skin. This is Salivary IL-4-inducing protein from Aedes aegypti (Yellowfever mosquito).